The chain runs to 364 residues: S-adenosylmethionine:tRNA ribosyltransferase-isomerase (364 aa).

It belongs to the QueA family. As to quaternary structure, monomer.

It localises to the cytoplasm. It catalyses the reaction 7-aminomethyl-7-carbaguanosine(34) in tRNA + S-adenosyl-L-methionine = epoxyqueuosine(34) in tRNA + adenine + L-methionine + 2 H(+). The protein operates within tRNA modification; tRNA-queuosine biosynthesis. Its function is as follows. Transfers and isomerizes the ribose moiety from AdoMet to the 7-aminomethyl group of 7-deazaguanine (preQ1-tRNA) to give epoxyqueuosine (oQ-tRNA). This is S-adenosylmethionine:tRNA ribosyltransferase-isomerase from Bradyrhizobium sp. (strain ORS 278).